A 275-amino-acid chain; its full sequence is Dermonecrotic toxin SpeSicTox-betaIIA2v (275 aa).

His-5 is an active-site residue. Positions 25 and 27 each coordinate Mg(2+). His-41 acts as the Nucleophile in catalysis. 2 disulfide bridges follow: Cys-45-Cys-51 and Cys-47-Cys-190. A Mg(2+)-binding site is contributed by Asp-85.

The protein belongs to the arthropod phospholipase D family. Class II subfamily. Mg(2+) is required as a cofactor. As to expression, expressed by the venom gland.

The protein localises to the secreted. It carries out the reaction an N-(acyl)-sphingosylphosphocholine = an N-(acyl)-sphingosyl-1,3-cyclic phosphate + choline. The enzyme catalyses an N-(acyl)-sphingosylphosphoethanolamine = an N-(acyl)-sphingosyl-1,3-cyclic phosphate + ethanolamine. The catalysed reaction is a 1-acyl-sn-glycero-3-phosphocholine = a 1-acyl-sn-glycero-2,3-cyclic phosphate + choline. It catalyses the reaction a 1-acyl-sn-glycero-3-phosphoethanolamine = a 1-acyl-sn-glycero-2,3-cyclic phosphate + ethanolamine. Functionally, dermonecrotic toxins cleave the phosphodiester linkage between the phosphate and headgroup of certain phospholipids (sphingolipid and lysolipid substrates), forming an alcohol (often choline) and a cyclic phosphate. This toxin acts on sphingomyelin (SM). It may also act on ceramide phosphoethanolamine (CPE), lysophosphatidylcholine (LPC) and lysophosphatidylethanolamine (LPE), but not on lysophosphatidylserine (LPS), and lysophosphatidylglycerol (LPG). It acts by transphosphatidylation, releasing exclusively cyclic phosphate products as second products. Induces dermonecrosis, hemolysis, increased vascular permeability, edema, inflammatory response, and platelet aggregation. The chain is Dermonecrotic toxin SpeSicTox-betaIIA2v from Sicarius peruensis (Six-eyed sand spider).